Consider the following 218-residue polypeptide: Thiamine-phosphate synthase (218 aa).

4-amino-2-methyl-5-(diphosphooxymethyl)pyrimidine-binding positions include 45–49 (QYREK) and Asn-77. 2 residues coordinate Mg(2+): Asp-78 and Asp-97. Residue Ser-116 coordinates 4-amino-2-methyl-5-(diphosphooxymethyl)pyrimidine. 142-144 (TKT) lines the 2-[(2R,5Z)-2-carboxy-4-methylthiazol-5(2H)-ylidene]ethyl phosphate pocket. Lys-145 serves as a coordination point for 4-amino-2-methyl-5-(diphosphooxymethyl)pyrimidine. 2-[(2R,5Z)-2-carboxy-4-methylthiazol-5(2H)-ylidene]ethyl phosphate-binding positions include Gly-173 and 193-194 (VT).

Belongs to the thiamine-phosphate synthase family. Mg(2+) is required as a cofactor.

It carries out the reaction 2-[(2R,5Z)-2-carboxy-4-methylthiazol-5(2H)-ylidene]ethyl phosphate + 4-amino-2-methyl-5-(diphosphooxymethyl)pyrimidine + 2 H(+) = thiamine phosphate + CO2 + diphosphate. The catalysed reaction is 2-(2-carboxy-4-methylthiazol-5-yl)ethyl phosphate + 4-amino-2-methyl-5-(diphosphooxymethyl)pyrimidine + 2 H(+) = thiamine phosphate + CO2 + diphosphate. It catalyses the reaction 4-methyl-5-(2-phosphooxyethyl)-thiazole + 4-amino-2-methyl-5-(diphosphooxymethyl)pyrimidine + H(+) = thiamine phosphate + diphosphate. Its pathway is cofactor biosynthesis; thiamine diphosphate biosynthesis; thiamine phosphate from 4-amino-2-methyl-5-diphosphomethylpyrimidine and 4-methyl-5-(2-phosphoethyl)-thiazole: step 1/1. In terms of biological role, condenses 4-methyl-5-(beta-hydroxyethyl)thiazole monophosphate (THZ-P) and 2-methyl-4-amino-5-hydroxymethyl pyrimidine pyrophosphate (HMP-PP) to form thiamine monophosphate (TMP). This is Thiamine-phosphate synthase from Pelotomaculum thermopropionicum (strain DSM 13744 / JCM 10971 / SI).